The sequence spans 224 residues: Cytidylate kinase (224 aa).

10 to 18 (GPASAGKST) contacts ATP.

Belongs to the cytidylate kinase family. Type 1 subfamily.

It localises to the cytoplasm. It carries out the reaction CMP + ATP = CDP + ADP. The catalysed reaction is dCMP + ATP = dCDP + ADP. The polypeptide is Cytidylate kinase (Leuconostoc mesenteroides subsp. mesenteroides (strain ATCC 8293 / DSM 20343 / BCRC 11652 / CCM 1803 / JCM 6124 / NCDO 523 / NBRC 100496 / NCIMB 8023 / NCTC 12954 / NRRL B-1118 / 37Y)).